Here is a 306-residue protein sequence, read N- to C-terminus: Ribonuclease Z (306 aa).

The Zn(2+) site is built by His63, His65, Asp67, His68, His141, Asp211, and His269. The Proton acceptor role is filled by Asp67.

This sequence belongs to the RNase Z family. As to quaternary structure, homodimer. Zn(2+) serves as cofactor.

The enzyme catalyses Endonucleolytic cleavage of RNA, removing extra 3' nucleotides from tRNA precursor, generating 3' termini of tRNAs. A 3'-hydroxy group is left at the tRNA terminus and a 5'-phosphoryl group is left at the trailer molecule.. In terms of biological role, zinc phosphodiesterase, which displays some tRNA 3'-processing endonuclease activity. Probably involved in tRNA maturation, by removing a 3'-trailer from precursor tRNA. This Staphylococcus carnosus (strain TM300) protein is Ribonuclease Z.